We begin with the raw amino-acid sequence, 190 residues long: Shikimate kinase (190 aa).

ATP is bound at residue 14–19; the sequence is GAGKST. Position 18 (Ser18) interacts with Mg(2+). Residues Asp36, Arg60, and Gly82 each coordinate substrate. Arg120 serves as a coordination point for ATP. Arg139 serves as a coordination point for substrate.

The protein belongs to the shikimate kinase family. Monomer. Requires Mg(2+) as cofactor.

It is found in the cytoplasm. It catalyses the reaction shikimate + ATP = 3-phosphoshikimate + ADP + H(+). The protein operates within metabolic intermediate biosynthesis; chorismate biosynthesis; chorismate from D-erythrose 4-phosphate and phosphoenolpyruvate: step 5/7. Catalyzes the specific phosphorylation of the 3-hydroxyl group of shikimic acid using ATP as a cosubstrate. The protein is Shikimate kinase of Thioalkalivibrio sulfidiphilus (strain HL-EbGR7).